The chain runs to 251 residues: uncharacterized protein (251 aa).

4 disordered regions span residues 1–93, 107–152, 169–188, and 224–251; these read MQPG…ASPG, GLRS…SRPQ, PSSI…VSLS, and LQAQ…STPS. Over residues 225–234 the composition is skewed to polar residues; it reads QAQNLPSSGP.

This is an uncharacterized protein from Homo sapiens (Human).